A 463-amino-acid polypeptide reads, in one-letter code: ATP-dependent protease ATPase subunit HslU (463 aa).

ATP is bound by residues Val-21, 63-68 (GVGKTE), Asp-276, Glu-341, and Arg-413.

The protein belongs to the ClpX chaperone family. HslU subfamily. A double ring-shaped homohexamer of HslV is capped on each side by a ring-shaped HslU homohexamer. The assembly of the HslU/HslV complex is dependent on binding of ATP.

The protein resides in the cytoplasm. Its function is as follows. ATPase subunit of a proteasome-like degradation complex; this subunit has chaperone activity. The binding of ATP and its subsequent hydrolysis by HslU are essential for unfolding of protein substrates subsequently hydrolyzed by HslV. HslU recognizes the N-terminal part of its protein substrates and unfolds these before they are guided to HslV for hydrolysis. This Thermotoga neapolitana (strain ATCC 49049 / DSM 4359 / NBRC 107923 / NS-E) protein is ATP-dependent protease ATPase subunit HslU.